The sequence spans 282 residues: Biotin synthase (282 aa).

Residues 1-228 (MQEIFLCSIS…NARLMVAGGR (228 aa)) form the Radical SAM core domain. The [4Fe-4S] cluster site is built by cysteine 17, cysteine 21, and cysteine 24. Cysteine 61, cysteine 96, cysteine 154, and arginine 221 together coordinate [2Fe-2S] cluster.

This sequence belongs to the radical SAM superfamily. Biotin synthase family. In terms of assembly, homodimer. Requires [4Fe-4S] cluster as cofactor. The cofactor is [2Fe-2S] cluster.

The catalysed reaction is (4R,5S)-dethiobiotin + (sulfur carrier)-SH + 2 reduced [2Fe-2S]-[ferredoxin] + 2 S-adenosyl-L-methionine = (sulfur carrier)-H + biotin + 2 5'-deoxyadenosine + 2 L-methionine + 2 oxidized [2Fe-2S]-[ferredoxin]. The protein operates within cofactor biosynthesis; biotin biosynthesis; biotin from 7,8-diaminononanoate: step 2/2. In terms of biological role, catalyzes the conversion of dethiobiotin (DTB) to biotin by the insertion of a sulfur atom into dethiobiotin via a radical-based mechanism. This is Biotin synthase from Helicobacter pylori (strain Shi470).